The primary structure comprises 838 residues: Probable beta-glucosidase I (838 aa).

N-linked (GlcNAc...) asparagine glycosylation is found at N57 and N197. D225 is an active-site residue. In terms of domain architecture, PA14 spans 395 to 555 (EGEKGFKFRV…GQEELISKAA (161 aa)). N-linked (GlcNAc...) asparagine glycosylation is present at N493.

This sequence belongs to the glycosyl hydrolase 3 family.

Its subcellular location is the secreted. It catalyses the reaction Hydrolysis of terminal, non-reducing beta-D-glucosyl residues with release of beta-D-glucose.. The protein operates within glycan metabolism; cellulose degradation. Beta-glucosidases are one of a number of cellulolytic enzymes involved in the degradation of cellulosic biomass. Catalyzes the last step releasing glucose from the inhibitory cellobiose. The polypeptide is Probable beta-glucosidase I (bglI) (Aspergillus clavatus (strain ATCC 1007 / CBS 513.65 / DSM 816 / NCTC 3887 / NRRL 1 / QM 1276 / 107)).